A 360-amino-acid polypeptide reads, in one-letter code: D-xylose 1-dehydrogenase [NADP(+)] (360 aa).

The protein belongs to the Gfo/Idh/MocA family. Homotretramer.

The enzyme catalyses D-xylofuranose + NADP(+) = D-xylono-1,4-lactone + NADPH + H(+). Its function is as follows. NADP-dependent D-xylose dehydrogenase involved in the degradation of D-xylose, a major component of hemicelluloses such as xylan. In addition to D-xylose, oxidizes D-ribose at similar kinetic constants, whereas D-glucose is oxidized with about 70-fold lower catalytic efficiency. The protein is D-xylose 1-dehydrogenase [NADP(+)] (gfo6) of Haloarcula marismortui (strain ATCC 43049 / DSM 3752 / JCM 8966 / VKM B-1809) (Halobacterium marismortui).